Reading from the N-terminus, the 261-residue chain is Vacuolar iron transporter (261 aa).

Residues 66-86 form a helical membrane-spanning segment; it reads GQVLIAALAALFAGALSMAVG. Glu-105, Glu-108, Glu-116, Glu-119, and Glu-154 together coordinate Fe cation. The next 3 membrane-spanning stretches (helical) occupy residues 170-190, 197-217, and 233-253; these read MVSF…GAWI, IGAI…VGAF, and GGAL…TLNI.

The protein belongs to the CCC1 family.

It localises to the vacuole membrane. The enzyme catalyses Fe(2+)(in) = Fe(2+)(out). Vacuolar iron transporter involved in the transfer of iron ions from the cytosol to the vacuole for intracellular iron storage. The polypeptide is Vacuolar iron transporter (Acanthamoeba castellanii (strain ATCC 30010 / Neff)).